A 502-amino-acid chain; its full sequence is Protein DETOXIFICATION 49 (502 aa).

The next 12 helical transmembrane spans lie at 41 to 61 (LPLI…MLFL), 75 to 95 (LALG…SIGM), 123 to 143 (LLCS…LLFF), 153 to 173 (AEIF…LHPI), 190 to 210 (AFFA…SLGL), 216 to 236 (ALGA…YIVF), 267 to 287 (VSVC…GLLL), 293 to 313 (VASM…PSSL), 338 to 358 (RTGL…ALMV), 372 to 392 (IVKL…GNCP), 414 to 434 (LCCF…FSGF), and 439 to 459 (LWLG…VVLA).

It belongs to the multi antimicrobial extrusion (MATE) (TC 2.A.66.1) family.

It is found in the membrane. This chain is Protein DETOXIFICATION 49, found in Arabidopsis thaliana (Mouse-ear cress).